The sequence spans 2335 residues: uncharacterized protein (2335 aa).

6 consecutive transmembrane segments (helical) span residues 114–134, 148–167, 172–194, 214–234, 255–275, and 307–327; these read FMIG…AHII, FISG…SIVF, VVIP…IVKY, IFFL…PFLS, EFGF…LSLL, and FVNL…IAYF. The segment covering 1043 to 1052 has biased composition (polar residues); that stretch reads ATSESISFNQ. Residues 1043–1064 form a disordered region; that stretch reads ATSESISFNQTKEKSNSTLGRL. Coiled-coil stretches lie at residues 1174–1202 and 1417–1447; these read VTLK…MKEA and KKRE…EKIV. Residues 1458 to 1471 show a composition bias toward polar residues; that stretch reads QTSQLTKNSFNPSR. The interval 1458-1479 is disordered; that stretch reads QTSQLTKNSFNPSRQKTDKNLE. The helical transmembrane segment at 2086–2106 threads the bilayer; it reads VWFPSGSLSQQVLPVHYIYVF. The tract at residues 2200–2222 is disordered; that stretch reads KQEKRILKSKQRRKITDSKQSTE.

This sequence belongs to the ycf78 family.

Its subcellular location is the plastid. The protein resides in the chloroplast membrane. This is an uncharacterized protein from Tetradesmus obliquus (Green alga).